The primary structure comprises 182 residues: Isopentenyl-diphosphate Delta-isomerase (182 aa).

Residues His25 and His32 each contribute to the Mn(2+) site. Cys67 is an active-site residue. His69 provides a ligand contact to Mn(2+). Glu87 serves as a coordination point for Mg(2+). Residues Glu114 and Glu116 each contribute to the Mn(2+) site. Residue Glu116 is part of the active site.

Belongs to the IPP isomerase type 1 family. As to quaternary structure, homodimer. Requires Mg(2+) as cofactor. It depends on Mn(2+) as a cofactor.

It localises to the cytoplasm. It carries out the reaction isopentenyl diphosphate = dimethylallyl diphosphate. It functions in the pathway isoprenoid biosynthesis; dimethylallyl diphosphate biosynthesis; dimethylallyl diphosphate from isopentenyl diphosphate: step 1/1. Functionally, catalyzes the 1,3-allylic rearrangement of the homoallylic substrate isopentenyl (IPP) to its highly electrophilic allylic isomer, dimethylallyl diphosphate (DMAPP). This Escherichia coli (strain K12 / MC4100 / BW2952) protein is Isopentenyl-diphosphate Delta-isomerase.